Here is a 241-residue protein sequence, read N- to C-terminus: MTFSRPSGRTADQLRPVRIERSFTRHAEGSVLVSFGDTRVLCTASVENRVPGFLRGKGEGWVTAEYGMLPRSTHTRSDREAARGKQGGRTLEIQRLIGRALRACVDRNALGERTITLDCDVLQADGGTRTAAITGAYVALADAVNLLIKRGDIKKHPLIGAVAAVSVGIYRGEPVLDLDYPEDSDCDTDMNVVMNDGGGFIELQGTAEGHAFRRDELNALLALAEKGMGELFALQRAALAG.

Phosphate-binding positions include R89 and 127–129; that span reads GTR.

Belongs to the RNase PH family. Homohexameric ring arranged as a trimer of dimers.

The catalysed reaction is tRNA(n+1) + phosphate = tRNA(n) + a ribonucleoside 5'-diphosphate. Functionally, phosphorolytic 3'-5' exoribonuclease that plays an important role in tRNA 3'-end maturation. Removes nucleotide residues following the 3'-CCA terminus of tRNAs; can also add nucleotides to the ends of RNA molecules by using nucleoside diphosphates as substrates, but this may not be physiologically important. Probably plays a role in initiation of 16S rRNA degradation (leading to ribosome degradation) during starvation. The chain is Ribonuclease PH from Xanthomonas axonopodis pv. citri (strain 306).